We begin with the raw amino-acid sequence, 494 residues long: UDP-N-acetylmuramate--L-alanine ligase (494 aa).

140–146 (GTHGKTT) lines the ATP pocket.

This sequence belongs to the MurCDEF family.

It localises to the cytoplasm. The enzyme catalyses UDP-N-acetyl-alpha-D-muramate + L-alanine + ATP = UDP-N-acetyl-alpha-D-muramoyl-L-alanine + ADP + phosphate + H(+). It functions in the pathway cell wall biogenesis; peptidoglycan biosynthesis. Functionally, cell wall formation. This chain is UDP-N-acetylmuramate--L-alanine ligase, found in Trichormus variabilis (strain ATCC 29413 / PCC 7937) (Anabaena variabilis).